Consider the following 550-residue polypeptide: Arginine--tRNA ligase (550 aa).

The 'HIGH' region motif lies at 130–140 (ANPTGPIHLGG).

This sequence belongs to the class-I aminoacyl-tRNA synthetase family. In terms of assembly, monomer.

The protein resides in the cytoplasm. It catalyses the reaction tRNA(Arg) + L-arginine + ATP = L-arginyl-tRNA(Arg) + AMP + diphosphate. The polypeptide is Arginine--tRNA ligase (argS) (Corynebacterium glutamicum (strain ATCC 13032 / DSM 20300 / JCM 1318 / BCRC 11384 / CCUG 27702 / LMG 3730 / NBRC 12168 / NCIMB 10025 / NRRL B-2784 / 534)).